The following is a 213-amino-acid chain: GTP cyclohydrolase 1 (213 aa).

Zn(2+) is bound by residues C104, H107, and C175.

It belongs to the GTP cyclohydrolase I family. In terms of assembly, toroid-shaped homodecamer, composed of two pentamers of five dimers.

The enzyme catalyses GTP + H2O = 7,8-dihydroneopterin 3'-triphosphate + formate + H(+). It functions in the pathway cofactor biosynthesis; 7,8-dihydroneopterin triphosphate biosynthesis; 7,8-dihydroneopterin triphosphate from GTP: step 1/1. This Brucella anthropi (strain ATCC 49188 / DSM 6882 / CCUG 24695 / JCM 21032 / LMG 3331 / NBRC 15819 / NCTC 12168 / Alc 37) (Ochrobactrum anthropi) protein is GTP cyclohydrolase 1.